A 444-amino-acid polypeptide reads, in one-letter code: ATP-dependent protease ATPase subunit HslU (444 aa).

ATP is bound by residues isoleucine 20 and 62-67; that span reads GVGKTE. Positions 130–158 are disordered; the sequence is EDRILDALVPPPRGASGEPERGEDNSARQ. The ATP site is built by aspartate 257, glutamate 322, and arginine 394.

Belongs to the ClpX chaperone family. HslU subfamily. A double ring-shaped homohexamer of HslV is capped on each side by a ring-shaped HslU homohexamer. The assembly of the HslU/HslV complex is dependent on binding of ATP.

The protein localises to the cytoplasm. In terms of biological role, ATPase subunit of a proteasome-like degradation complex; this subunit has chaperone activity. The binding of ATP and its subsequent hydrolysis by HslU are essential for unfolding of protein substrates subsequently hydrolyzed by HslV. HslU recognizes the N-terminal part of its protein substrates and unfolds these before they are guided to HslV for hydrolysis. The sequence is that of ATP-dependent protease ATPase subunit HslU from Bordetella pertussis (strain Tohama I / ATCC BAA-589 / NCTC 13251).